The chain runs to 496 residues: Glutamyl-tRNA(Gln) amidotransferase subunit A (496 aa).

Residues lysine 75 and serine 150 each act as charge relay system in the active site. Serine 174 acts as the Acyl-ester intermediate in catalysis.

This sequence belongs to the amidase family. GatA subfamily. In terms of assembly, heterotrimer of A, B and C subunits.

It catalyses the reaction L-glutamyl-tRNA(Gln) + L-glutamine + ATP + H2O = L-glutaminyl-tRNA(Gln) + L-glutamate + ADP + phosphate + H(+). Its function is as follows. Allows the formation of correctly charged Gln-tRNA(Gln) through the transamidation of misacylated Glu-tRNA(Gln) in organisms which lack glutaminyl-tRNA synthetase. The reaction takes place in the presence of glutamine and ATP through an activated gamma-phospho-Glu-tRNA(Gln). This is Glutamyl-tRNA(Gln) amidotransferase subunit A from Burkholderia mallei (strain NCTC 10247).